We begin with the raw amino-acid sequence, 177 residues long: Probable inosine/xanthosine triphosphatase (177 aa).

This sequence belongs to the YjjX NTPase family. In terms of assembly, homodimer. Mg(2+) is required as a cofactor. It depends on Mn(2+) as a cofactor.

The enzyme catalyses XTP + H2O = XDP + phosphate + H(+). It catalyses the reaction ITP + H2O = IDP + phosphate + H(+). Its function is as follows. Phosphatase that hydrolyzes non-canonical purine nucleotides such as XTP and ITP to their respective diphosphate derivatives. Probably excludes non-canonical purines from DNA/RNA precursor pool, thus preventing their incorporation into DNA/RNA and avoiding chromosomal lesions. In Halalkalibacterium halodurans (strain ATCC BAA-125 / DSM 18197 / FERM 7344 / JCM 9153 / C-125) (Bacillus halodurans), this protein is Probable inosine/xanthosine triphosphatase.